The primary structure comprises 59 residues: Potassium channel toxin alpha-KTx 15.4 (59 aa).

Residues 1-22 (MKFSSIILLTLLICSMSIFGNC) form the signal peptide. Gln-23 is subject to Pyrrolidone carboxylic acid. 3 disulfide bridges follow: Cys-30–Cys-50, Cys-35–Cys-55, and Cys-39–Cys-57.

As to expression, expressed by the venom gland.

Its subcellular location is the secreted. Functionally, blocker of A-type voltage-gated potassium channels of cerebellar granular cells. May also inhibit Kv4/KCND when coexpressed with DPP6 or DPP10. The occlusion of the outer entry of the K(+) conducting pore is partially reversible and affects both open and closed channels. It shares the same target in rat brain than BmTX3 (AC Q8I0L5) and AmmTX3 (AC P60208). This chain is Potassium channel toxin alpha-KTx 15.4, found in Androctonus australis (Sahara scorpion).